An 89-amino-acid polypeptide reads, in one-letter code: Small ribosomal subunit protein uS15 (89 aa).

The protein belongs to the universal ribosomal protein uS15 family. Part of the 30S ribosomal subunit. Forms a bridge to the 50S subunit in the 70S ribosome, contacting the 23S rRNA.

Functionally, one of the primary rRNA binding proteins, it binds directly to 16S rRNA where it helps nucleate assembly of the platform of the 30S subunit by binding and bridging several RNA helices of the 16S rRNA. Its function is as follows. Forms an intersubunit bridge (bridge B4) with the 23S rRNA of the 50S subunit in the ribosome. The sequence is that of Small ribosomal subunit protein uS15 from Cupriavidus metallidurans (strain ATCC 43123 / DSM 2839 / NBRC 102507 / CH34) (Ralstonia metallidurans).